The primary structure comprises 103 residues: Large ribosomal subunit protein uL24 (103 aa).

The protein belongs to the universal ribosomal protein uL24 family. Part of the 50S ribosomal subunit.

Its function is as follows. One of two assembly initiator proteins, it binds directly to the 5'-end of the 23S rRNA, where it nucleates assembly of the 50S subunit. Functionally, one of the proteins that surrounds the polypeptide exit tunnel on the outside of the subunit. In Brucella abortus (strain S19), this protein is Large ribosomal subunit protein uL24.